The following is a 120-amino-acid chain: Holo-[acyl-carrier-protein] synthase (120 aa).

The Mg(2+) site is built by Asp8 and Glu60.

This sequence belongs to the P-Pant transferase superfamily. AcpS family. Mg(2+) is required as a cofactor.

It is found in the cytoplasm. The catalysed reaction is apo-[ACP] + CoA = holo-[ACP] + adenosine 3',5'-bisphosphate + H(+). Functionally, transfers the 4'-phosphopantetheine moiety from coenzyme A to a Ser of acyl-carrier-protein. The polypeptide is Holo-[acyl-carrier-protein] synthase (Anaplasma marginale (strain Florida)).